Consider the following 557-residue polypeptide: 6-phosphofructo-2-kinase/fructose-2,6-bisphosphatase 2 (557 aa).

A compositionally biased stretch (low complexity) spans 1–16 (MSENSTFSTEDSSSSS). Positions 1 to 21 (MSENSTFSTEDSSSSSYKPHA) are disordered. S2 is modified (N-acetylserine). The interval 2-251 (SENSTFSTED…VYYLMNIHVH (250 aa)) is 6-phosphofructo-2-kinase. S32 is subject to Phosphoserine; by PKA. Residue 48-56 (GLPARGKTY) participates in ATP binding. Beta-D-fructose 6-phosphate contacts are provided by R81 and R105. Residue D131 is part of the active site. The beta-D-fructose 6-phosphate site is built by T133 and R139. Residue C161 is part of the active site. Position 170–175 (170–175 (NILEVK)) interacts with ATP. Positions 175, 196, and 200 each coordinate beta-D-fructose 6-phosphate. The tract at residues 252-557 (PRTIYLCRHG…PSMASLTLLS (306 aa)) is fructose-2,6-bisphosphatase. R259 contributes to the beta-D-fructose 2,6-bisphosphate binding site. The active-site Tele-phosphohistidine intermediate is H260. Beta-D-fructose 2,6-bisphosphate is bound by residues N266 and G272. E329 (proton donor/acceptor) is an active-site residue. Residues Y340, R354, K358, Y369, Q395, and R399 each coordinate beta-D-fructose 2,6-bisphosphate. Residue 351 to 354 (FALR) coordinates ATP. ATP-binding positions include 395-399 (QAVMR) and Y431. Residues 449-495 (RDKPTHNFPKSQTPVRMRRNSFTPLSSSNTIRRPRNYSVGSRPLKPL) are disordered. The span at 456–479 (FPKSQTPVRMRRNSFTPLSSSNTI) shows a compositional bias: polar residues. Residue S469 is modified to Phosphoserine. Phosphothreonine is present on T471. Residue T478 is modified to Phosphothreonine; by PKC. 2 positions are modified to phosphoserine: S486 and S496.

The protein in the C-terminal section; belongs to the phosphoglycerate mutase family. As to quaternary structure, homodimer. Forms a heterodimer with PFKFB3. In terms of processing, phosphorylation by AMPK stimulates activity.

The enzyme catalyses beta-D-fructose 2,6-bisphosphate + H2O = beta-D-fructose 6-phosphate + phosphate. The catalysed reaction is beta-D-fructose 6-phosphate + ATP = beta-D-fructose 2,6-bisphosphate + ADP + H(+). Phosphorylation results in the activation of the kinase activity. Functionally, synthesis and degradation of fructose 2,6-bisphosphate. The protein is 6-phosphofructo-2-kinase/fructose-2,6-bisphosphatase 2 (Pfkfb2) of Rattus norvegicus (Rat).